The following is a 196-amino-acid chain: Imidazoleglycerol-phosphate dehydratase (196 aa).

Belongs to the imidazoleglycerol-phosphate dehydratase family.

The protein localises to the cytoplasm. It carries out the reaction D-erythro-1-(imidazol-4-yl)glycerol 3-phosphate = 3-(imidazol-4-yl)-2-oxopropyl phosphate + H2O. It participates in amino-acid biosynthesis; L-histidine biosynthesis; L-histidine from 5-phospho-alpha-D-ribose 1-diphosphate: step 6/9. The chain is Imidazoleglycerol-phosphate dehydratase from Nitratidesulfovibrio vulgaris (strain DSM 19637 / Miyazaki F) (Desulfovibrio vulgaris).